Here is a 1521-residue protein sequence, read N- to C-terminus: Probable DNA topoisomerase 2 (1521 aa).

The span at 1–10 (MSDSENDYSD) shows a compositional bias: acidic residues. The segment at 1 to 87 (MSDSENDYSD…DDKSSSSDNE (87 aa)) is disordered. Basic residues predominate over residues 36-48 (SKKKASATRKPAA). A compositionally biased stretch (low complexity) spans 49–62 (KKATTTTTSTTKKS). ATP-binding positions include Asn-163, Asn-192, 220 to 222 (SSH), and 233 to 240 (GRNGFGAK). Residues 412-414 (NKK) are interaction with DNA. 446-448 (QTK) is a binding site for ATP. The region spanning 527–640 (CTLILTEGDS…TLLRMPGFLV (114 aa)) is the Toprim domain. Positions 533, 609, and 611 each coordinate Mg(2+). The 503-residue stretch at 771–1273 (IPNIVDGLKT…PIQEIYKRDL (503 aa)) folds into the Topo IIA-type catalytic domain. The O-(5'-phospho-DNA)-tyrosine intermediate role is filled by Tyr-861. A disordered region spans residues 1007-1047 (GTRKKKKEEKEKKAASRKGTKAKPTTTKRSKRVDDDDDNEK). Residues 1021 to 1037 (ASRKGTKAKPTTTKRSK) show a composition bias toward basic residues. Positions 1085–1094 (KLVSTINETN) are interaction with DNA. Disordered stretches follow at residues 1192-1222 (KIKKKKNAFDEEDAAISSDEEKDGAQEEQDD) and 1335-1521 (IPTT…SDSD). The segment covering 1201-1222 (DEEDAAISSDEEKDGAQEEQDD) has biased composition (acidic residues). The span at 1354–1368 (TTSTSTSTTTSSNTK) shows a compositional bias: low complexity. Acidic residues predominate over residues 1422-1438 (LSDESDQESDQESDQGS). The span at 1454 to 1467 (PTTIATKKATTSKS) shows a compositional bias: low complexity. Over residues 1468 to 1480 (KVIDDKSSDDEVI) the composition is skewed to basic and acidic residues. Positions 1503 to 1521 (SDSDDDDLYDNEESSSDSD) are enriched in acidic residues.

The protein belongs to the type II topoisomerase family. In terms of assembly, homodimer. Requires Mg(2+) as cofactor. The cofactor is Mn(2+). It depends on Ca(2+) as a cofactor.

It localises to the nucleus. The enzyme catalyses ATP-dependent breakage, passage and rejoining of double-stranded DNA.. In terms of biological role, control of topological states of DNA by transient breakage and subsequent rejoining of DNA strands. Topoisomerase II makes double-strand breaks. This Dictyostelium discoideum (Social amoeba) protein is Probable DNA topoisomerase 2 (top2).